Consider the following 445-residue polypeptide: MKVKVLCRNPDDYVRETKRDLQRVPRNYDPALHPFEVSREYTRALNATKLERVFAKPFIASLDGHRDGVNCIAKHPKSLSTVLSGACDGEVKIWNLTKRECSRTIQAHDGFVRGLCVRFCGTSFFTVGDDKTVKQWAMESPGYGEKVEPMRTILGKTVFTGIDHHVKDAVFATCGQQVDIWDEQRSAPMRSYAWGVDSISSVRFNPVETHILSSCGTDRSIVLYDKRKPTPLKKIILEMRTNALCWNPMEAFIFTAANENFNLYTYDMRYMDSPVKVHMDHVSAVLDVDYSPTGKELVSASFDKSIRIFPVQSGHSREVYHTKRMQHVTCVRWSADNKYVLCGSDEMNIRIWKANASEKLGVLSPRERAAQNYNQKLKEKFQHHPQIKRIARHRHLPRSIYSQIKEQQIMREARRKKDVNRRKHSKPGSVPIPSEKKKHVLAVVE.

7 WD repeats span residues 64–104 (GHRD…CSRT), 107–146 (AHDG…YGEK), 152–191 (TILG…PMRS), 194–234 (WGVD…PLKK), 236–276 (ILEM…SPVK), 280–319 (DHVS…SREV), and 323–362 (KRMQ…KLGV). Residues 353 to 441 (KANASEKLGV…IPSEKKKHVL (89 aa)) are required for nucleolar location. Composition is skewed to basic residues over residues 413-426 (ARRK…KHSK) and 436-445 (KKKHVLAVVE). Residues 413 to 445 (ARRKKDVNRRKHSKPGSVPIPSEKKKHVLAVVE) form a disordered region.

This sequence belongs to the WD repeat DCAF13/WDSOF1 family. As to quaternary structure, part of the small subunit (SSU) processome, composed of more than 70 proteins and the RNA chaperone small nucleolar RNA (snoRNA) U3. Component of the DCX(DCAF13) E3 ubiquitin ligase complex, at least composed of CUL4 (CUL4A or CUL4B), DDB1, DCAF13 and RBX1.

The protein localises to the nucleus. Its subcellular location is the nucleolus. It functions in the pathway protein modification; protein ubiquitination. Part of the small subunit (SSU) processome, first precursor of the small eukaryotic ribosomal subunit. During the assembly of the SSU processome in the nucleolus, many ribosome biogenesis factors, an RNA chaperone and ribosomal proteins associate with the nascent pre-rRNA and work in concert to generate RNA folding, modifications, rearrangements and cleavage as well as targeted degradation of pre-ribosomal RNA by the RNA exosome. Functionally, substrate-recognition component of a DCX (DDB1-CUL4-X-box) E3 ubiquitin-protein ligase complex. The polypeptide is DDB1- and CUL4-associated factor 13 (dcaf13) (Xenopus laevis (African clawed frog)).